A 451-amino-acid polypeptide reads, in one-letter code: Crh-like protein 2 (451 aa).

Positions 1–21 (MQFNSLVLLAGATILSPFVQA) are cleaved as a signal peptide. The GH16 domain occupies 22 to 241 (QTWTTCNPLN…FTKVPFTMYV (220 aa)). Cysteine 27 and cysteine 34 form a disulfide bridge. Asparagine 31, asparagine 43, asparagine 49, and asparagine 59 each carry an N-linked (GlcNAc...) asparagine glycan. Glutamate 121 acts as the Nucleophile in catalysis. Glutamate 125 serves as the catalytic Proton donor. Position 125 (glutamate 125) interacts with chitin. N-linked (GlcNAc...) asparagine glycosylation is found at asparagine 130, asparagine 143, and asparagine 165. Positions 206, 210, and 222 each coordinate chitin. Asparagine 273 carries N-linked (GlcNAc...) asparagine glycosylation. The helical transmembrane segment at 305–325 (VYCGGGAAVAALVSAFLFTFL) threads the bilayer. A glycan (N-linked (GlcNAc...) asparagine) is linked at asparagine 366.

Belongs to the glycosyl hydrolase 16 family. CRH1 subfamily. In terms of assembly, forms homodimers as well as heterodimers with other crh protein members crh1 and crh3. Dimerization may be necessary for the transglycosylation activity.

It is found in the membrane. It catalyses the reaction Random endo-hydrolysis of N-acetyl-beta-D-glucosaminide (1-&gt;4)-beta-linkages in chitin and chitodextrins.. Its function is as follows. Dual chitinase/transglycosylase that plays a role in cell wall architecture. Chitinase and transglycosylase activities are coupled. Required for the polysaccharide cross-linking at the septa and the cell wall. More specifically, transfers chitin to 1,6-beta-glucan in the cell wall. In Botryotinia fuckeliana (strain B05.10) (Noble rot fungus), this protein is Crh-like protein 2.